The chain runs to 216 residues: Adenylate kinase (216 aa).

Position 10 to 15 (10 to 15 (GAGKGT)) interacts with ATP. The tract at residues 30–59 (STGDMFRAAMKAETEMGLQAKSFIDKGALV) is NMP. AMP-binding positions include threonine 31, arginine 36, 57-59 (ALV), 85-88 (GFPR), and glutamine 92. The interval 126 to 163 (GRRICKECGATYHLEFNPPAKADVCDKCGGELYQRSDD) is LID. Arginine 127 is an ATP binding site. The Zn(2+) site is built by cysteine 130 and cysteine 133. Position 136–137 (136–137 (TY)) interacts with ATP. Positions 150 and 153 each coordinate Zn(2+). Positions 160 and 171 each coordinate AMP. Glutamine 199 provides a ligand contact to ATP.

Belongs to the adenylate kinase family. In terms of assembly, monomer.

The protein localises to the cytoplasm. It carries out the reaction AMP + ATP = 2 ADP. Its pathway is purine metabolism; AMP biosynthesis via salvage pathway; AMP from ADP: step 1/1. In terms of biological role, catalyzes the reversible transfer of the terminal phosphate group between ATP and AMP. Plays an important role in cellular energy homeostasis and in adenine nucleotide metabolism. The chain is Adenylate kinase from Bacillus cereus (strain ATCC 10987 / NRS 248).